A 559-amino-acid chain; its full sequence is Potassium-transporting ATPase potassium-binding subunit (559 aa).

A run of 13 helical transmembrane segments spans residues 5–25 (GFLL…PLGS), 27–47 (LARL…RILW), 63–83 (LLAL…LLFW), 132–152 (GLTV…FALI), 170–190 (LVRI…LFFI), 253–273 (LAQM…FGEA), 283–303 (LLWA…WAEV), 327–347 (FGVL…CGAV), 356–376 (ALGG…FGGV), 379–399 (GLYG…LMIG), 416–436 (MTAL…ALAM), 484–504 (LLAF…MAIA), and 524–544 (GALF…LTFI).

Belongs to the KdpA family. The system is composed of three essential subunits: KdpA, KdpB and KdpC.

The protein resides in the cell inner membrane. Part of the high-affinity ATP-driven potassium transport (or Kdp) system, which catalyzes the hydrolysis of ATP coupled with the electrogenic transport of potassium into the cytoplasm. This subunit binds the periplasmic potassium ions and delivers the ions to the membrane domain of KdpB through an intramembrane tunnel. The protein is Potassium-transporting ATPase potassium-binding subunit of Salmonella typhi.